A 317-amino-acid polypeptide reads, in one-letter code: Acetyl-coenzyme A carboxylase carboxyl transferase subunit alpha (317 aa).

The 254-residue stretch at 40 to 293 (LEKRSADALK…GDIIAASLRS (254 aa)) folds into the CoA carboxyltransferase C-terminal domain.

The protein belongs to the AccA family. As to quaternary structure, acetyl-CoA carboxylase is a heterohexamer composed of biotin carboxyl carrier protein (AccB), biotin carboxylase (AccC) and two subunits each of ACCase subunit alpha (AccA) and ACCase subunit beta (AccD).

It is found in the cytoplasm. It carries out the reaction N(6)-carboxybiotinyl-L-lysyl-[protein] + acetyl-CoA = N(6)-biotinyl-L-lysyl-[protein] + malonyl-CoA. It participates in lipid metabolism; malonyl-CoA biosynthesis; malonyl-CoA from acetyl-CoA: step 1/1. Its function is as follows. Component of the acetyl coenzyme A carboxylase (ACC) complex. First, biotin carboxylase catalyzes the carboxylation of biotin on its carrier protein (BCCP) and then the CO(2) group is transferred by the carboxyltransferase to acetyl-CoA to form malonyl-CoA. This Brucella abortus (strain S19) protein is Acetyl-coenzyme A carboxylase carboxyl transferase subunit alpha.